A 250-amino-acid chain; its full sequence is MRKAIIAGNWKMNNTISQGLKLVEELKPLVADANCDVVVCPPTLALDAVVKATEGTNIKVGAQNMHFEESGAFTGETAPAMLEELGVKYVILGHSERRQYFGENDADLNKKMKKAFEHNLTPILCIGETLEEREADVTEEVLAKQIKLDLAGLTEAQIAETVIAYEPIWAIGTGKTATSDQAEETIAFVRKTVAGMFGAEAAEKMRIQYGGSVKPATIKEQMAKPNIDGGLIGGASLKAADFAAIVNFDK.

Substrate is bound at residue 9-11; the sequence is NWK. Catalysis depends on histidine 94, which acts as the Electrophile. Catalysis depends on glutamate 166, which acts as the Proton acceptor. Substrate contacts are provided by residues glycine 172, serine 212, and 233-234; that span reads GG.

It belongs to the triosephosphate isomerase family. Homodimer.

Its subcellular location is the cytoplasm. The catalysed reaction is D-glyceraldehyde 3-phosphate = dihydroxyacetone phosphate. It functions in the pathway carbohydrate biosynthesis; gluconeogenesis. It participates in carbohydrate degradation; glycolysis; D-glyceraldehyde 3-phosphate from glycerone phosphate: step 1/1. Functionally, involved in the gluconeogenesis. Catalyzes stereospecifically the conversion of dihydroxyacetone phosphate (DHAP) to D-glyceraldehyde-3-phosphate (G3P). The chain is Triosephosphate isomerase from Clostridium novyi (strain NT).